The following is a 400-amino-acid chain: Putative zinc-binding protein ORF78 (400 aa).

The tract at residues 9–33 (LPRKRRAVAQPRTRQPPPKVHREDT) is disordered.

This chain is Putative zinc-binding protein ORF78 (ORF78), found in Ictalurid herpesvirus 1 (strain Auburn) (IcHV-1).